Reading from the N-terminus, the 865-residue chain is Nicotinate catabolism cluster-specific transcription factor (865 aa).

C2H2-type zinc fingers lie at residues 8-32 (HACT…SLNH) and 41-63 (YTCQ…LDRH). Positions 74 to 168 (GKGVLETRKR…SIDDDGTDPD (95 aa)) are disordered. The Nuclear localization signal(NLS) signature appears at 77-87 (VLETRKRMRRA). The segment covering 78 to 89 (LETRKRMRRAED) has biased composition (basic and acidic residues). Residues 96–105 (PPKRPSRHQQ) show a composition bias toward basic residues. Low complexity predominate over residues 108 to 132 (GPPVGAPLSSSGSVSAGSGRSSRSP). The Nuclear export signal (NES) signature appears at 285 to 289 (LDIDL).

The protein resides in the nucleus. Transcription factor that specifically regulates the expression of the hxn gene cluster that mediates the degradation of nicotinate and related metabolites. The sequence is that of Nicotinate catabolism cluster-specific transcription factor from Emericella nidulans (strain FGSC A4 / ATCC 38163 / CBS 112.46 / NRRL 194 / M139) (Aspergillus nidulans).